We begin with the raw amino-acid sequence, 24 residues long: Ascaphin-4 (24 aa).

In terms of tissue distribution, expressed by the skin glands.

The protein localises to the secreted. Its function is as follows. Antimicrobial peptide that shows higher potency against Gram-negative bacteria than against Gram-positive bacteria. Has a very week hemolytic activity. The protein is Ascaphin-4 of Ascaphus truei (Coastal tailed frog).